Here is a 353-residue protein sequence, read N- to C-terminus: UDP-N-acetylglucosamine--N-acetylmuramyl-(pentapeptide) pyrophosphoryl-undecaprenol N-acetylglucosamine transferase (353 aa).

Residues 10 to 12 (TGG), Asn124, Ser183, and Gln283 contribute to the UDP-N-acetyl-alpha-D-glucosamine site.

This sequence belongs to the glycosyltransferase 28 family. MurG subfamily.

It is found in the cell inner membrane. The catalysed reaction is di-trans,octa-cis-undecaprenyl diphospho-N-acetyl-alpha-D-muramoyl-L-alanyl-D-glutamyl-meso-2,6-diaminopimeloyl-D-alanyl-D-alanine + UDP-N-acetyl-alpha-D-glucosamine = di-trans,octa-cis-undecaprenyl diphospho-[N-acetyl-alpha-D-glucosaminyl-(1-&gt;4)]-N-acetyl-alpha-D-muramoyl-L-alanyl-D-glutamyl-meso-2,6-diaminopimeloyl-D-alanyl-D-alanine + UDP + H(+). The protein operates within cell wall biogenesis; peptidoglycan biosynthesis. Its function is as follows. Cell wall formation. Catalyzes the transfer of a GlcNAc subunit on undecaprenyl-pyrophosphoryl-MurNAc-pentapeptide (lipid intermediate I) to form undecaprenyl-pyrophosphoryl-MurNAc-(pentapeptide)GlcNAc (lipid intermediate II). This is UDP-N-acetylglucosamine--N-acetylmuramyl-(pentapeptide) pyrophosphoryl-undecaprenol N-acetylglucosamine transferase from Helicobacter acinonychis (strain Sheeba).